Reading from the N-terminus, the 550-residue chain is Hydroxylamine reductase (550 aa).

4 residues coordinate [2Fe-2S] cluster: C3, C6, C18, and C25. H249, E273, C317, C405, C433, C458, E492, and K494 together coordinate hybrid [4Fe-2O-2S] cluster. C405 carries the post-translational modification Cysteine persulfide.

The protein belongs to the HCP family. It depends on [2Fe-2S] cluster as a cofactor. Hybrid [4Fe-2O-2S] cluster serves as cofactor.

It localises to the cytoplasm. It carries out the reaction A + NH4(+) + H2O = hydroxylamine + AH2 + H(+). Its function is as follows. Catalyzes the reduction of hydroxylamine to form NH(3) and H(2)O. This chain is Hydroxylamine reductase, found in Salmonella typhimurium (strain LT2 / SGSC1412 / ATCC 700720).